Here is a 226-residue protein sequence, read N- to C-terminus: MIPRPQPHSGRWRAGAARRLTSLVAAAFAAATLLLTPALAPPASAGCPDAEVVFARGTGEPPGLGRVGQAFVSSLRQQTNKSIGTYGVNYPANGDFLAAADGANDASDHIQQMASACRATRLVLGGYSQGAAVIDIVTAAPLPGLGFTQPLPPAADDHIAAIALFGNPSGRAGGLMSALTPQFGSKTINLCNNGDPICSDGNRWRAHLGYVPGMTNQAARFVASRI.

The first 45 residues, Met-1–Ala-45, serve as a signal peptide directing secretion. A disulfide bridge links Cys-47 with Cys-117. Catalysis depends on Ser-128, which acts as the Nucleophile. An intrachain disulfide couples Cys-191 to Cys-198. The active site involves Asp-195. Residue His-207 is the Proton donor/acceptor of the active site.

Belongs to the cutinase family. In terms of assembly, homodimer.

The protein resides in the cell membrane. It is found in the secreted. The protein localises to the cell wall. It carries out the reaction 1,2-dihexadecanoyl-sn-glycero-3-phosphocholine + H2O = 1-hexadecanoyl-sn-glycero-3-phosphocholine + hexadecanoate + H(+). It catalyses the reaction a butanoate ester + H2O = an aliphatic alcohol + butanoate + H(+). Its activity is regulated as follows. Inhibited by high concentrations of paraoxon. Inhibited by tetrahydrolipstatin (THL), a specific lipase inhibitor. A2-type phospholipase, which is probably involved in the degradation of macrophage membrane. Hydrolyzes dipalmitoylphosphatidylcholine. Also shows moderate esterase activity and hydrolyzes the p-nitrophenol-linked aliphatic ester pNP-butyrate (C4). Does not exhibit cutinase activity. This Mycobacterium tuberculosis (strain ATCC 25618 / H37Rv) protein is Phospholipase Culp4.